The chain runs to 411 residues: Secretion apparatus protein BsaZ (411 aa).

4 helical membrane passes run 28–48 (IVAL…VDLT), 80–100 (IAAP…LVQS), 137–157 (ALLY…LYHA), and 175–195 (IVLT…VLIL). The tract at residues 341–411 (AANRGGPPPE…APARTGDQNA (71 aa)) is disordered. Low complexity predominate over residues 370 to 404 (DACADNAFPDDAPPGAAAPNAGSPDGPAPDGGAPA).

The protein belongs to the type III secretion exporter family.

The protein resides in the cell membrane. Functionally, part of the bsa type III secretion system, is involved in the intracellular replication of invading bacteria inside the host cell. Probably necessary for the lysis of the vacuole membrane and escape into the host cell cytoplasm. This chain is Secretion apparatus protein BsaZ (bsaZ), found in Burkholderia pseudomallei (strain 1710b).